The chain runs to 263 residues: tRNA pseudouridine synthase A (263 aa).

Residue aspartate 57 is the Nucleophile of the active site. Tyrosine 115 is a substrate binding site.

It belongs to the tRNA pseudouridine synthase TruA family. In terms of assembly, homodimer.

It carries out the reaction uridine(38/39/40) in tRNA = pseudouridine(38/39/40) in tRNA. Formation of pseudouridine at positions 38, 39 and 40 in the anticodon stem and loop of transfer RNAs. The polypeptide is tRNA pseudouridine synthase A (Buchnera aphidicola subsp. Schizaphis graminum (strain Sg)).